The following is a 429-amino-acid chain: GTPase Obg (429 aa).

Positions 1-158 (MLIDKCTLFL…IEAQFELKYI (158 aa)) constitute an Obg domain. The OBG-type G domain maps to 159–330 (ADVGLLGLPN…LLKDIFKDYK (172 aa)). Residues 165–172 (GLPNAGKS), 190–194 (FTTLS), 211–214 (DIPG), 281–284 (NKID), and 311–313 (SGF) contribute to the GTP site. 2 residues coordinate Mg(2+): S172 and T192. Residues 351–429 (KVEKEQEDIV…RIQDVMFEIN (79 aa)) enclose the OCT domain.

It belongs to the TRAFAC class OBG-HflX-like GTPase superfamily. OBG GTPase family. As to quaternary structure, monomer. It depends on Mg(2+) as a cofactor.

It is found in the cytoplasm. An essential GTPase which binds GTP, GDP and possibly (p)ppGpp with moderate affinity, with high nucleotide exchange rates and a fairly low GTP hydrolysis rate. Plays a role in control of the cell cycle, stress response, ribosome biogenesis and in those bacteria that undergo differentiation, in morphogenesis control. This is GTPase Obg from Malacoplasma penetrans (strain HF-2) (Mycoplasma penetrans).